The following is a 239-amino-acid chain: Insulin-like growth factor-binding protein 3 receptor (239 aa).

Positions 1 to 38 (MGSCQAGHYLHFCLAHHPPLVCATLILLLLGLSGLGLG) are cleaved as a signal peptide. Topologically, residues 39 to 205 (GFLLTHRTDL…EELTLCGSRL (167 aa)) are extracellular. N-linked (GlcNAc...) asparagine glycosylation is found at Asn-101 and Asn-167. The helical transmembrane segment at 206–226 (LVLGFFLILFCGLCCLTAACF) threads the bilayer. Over 227 to 239 (HPRRESHWSRTRL) the chain is Cytoplasmic.

Interacts with IGFBP3. Interacts with CASP8.

The protein localises to the cell membrane. Cell death receptor specific for IGFBP3, may mediate caspase-8-dependent apoptosis upon ligand binding. The sequence is that of Insulin-like growth factor-binding protein 3 receptor (TMEM219) from Bos taurus (Bovine).